The following is a 347-amino-acid chain: Quinolinate synthase (347 aa).

Iminosuccinate-binding residues include His47 and Ser68. Cys113 provides a ligand contact to [4Fe-4S] cluster. Iminosuccinate-binding positions include 139–141 and Ser156; that span reads YAN. Cys200 serves as a coordination point for [4Fe-4S] cluster. Iminosuccinate is bound by residues 226–228 and Thr243; that span reads HPE. [4Fe-4S] cluster is bound at residue Cys297.

Belongs to the quinolinate synthase family. Type 1 subfamily. It depends on [4Fe-4S] cluster as a cofactor.

The protein resides in the cytoplasm. The catalysed reaction is iminosuccinate + dihydroxyacetone phosphate = quinolinate + phosphate + 2 H2O + H(+). It functions in the pathway cofactor biosynthesis; NAD(+) biosynthesis; quinolinate from iminoaspartate: step 1/1. Its function is as follows. Catalyzes the condensation of iminoaspartate with dihydroxyacetone phosphate to form quinolinate. The polypeptide is Quinolinate synthase (Escherichia coli O9:H4 (strain HS)).